A 401-amino-acid polypeptide reads, in one-letter code: Phosphoglycerate kinase, cytosolic (401 aa).

11 residues coordinate (2R)-3-phosphoglycerate: valine 24, aspartate 25, asparagine 27, arginine 41, serine 63, histidine 64, glycine 66, arginine 67, arginine 122, histidine 154, and arginine 155. Glycine 200 serves as a coordination point for ADP. Residue glycine 200 participates in CDP binding. Positions 202 and 206 each coordinate AMP. Lysine 206 is an ATP binding site. Glycine 224 contributes to the ADP binding site. Glycine 224 provides a ligand contact to CDP. AMP contacts are provided by glycine 225 and glycine 297. The ATP site is built by glycine 225 and glycine 297. Residues glycine 322 and phenylalanine 327 each contribute to the CDP site. Phenylalanine 327 is a binding site for ADP. Position 328 (glutamate 328) interacts with AMP. 3 residues coordinate ATP: glutamate 328, aspartate 359, and serine 360. Aspartate 359 is a Mg(2+) binding site.

This sequence belongs to the phosphoglycerate kinase family. Monomer. Requires Mg(2+) as cofactor.

The protein resides in the cytoplasm. The enzyme catalyses (2R)-3-phosphoglycerate + ATP = (2R)-3-phospho-glyceroyl phosphate + ADP. It functions in the pathway carbohydrate degradation; glycolysis; pyruvate from D-glyceraldehyde 3-phosphate: step 2/5. This chain is Phosphoglycerate kinase, cytosolic, found in Nicotiana tabacum (Common tobacco).